A 268-amino-acid polypeptide reads, in one-letter code: Regulation of nuclear pre-mRNA domain-containing protein 1A (268 aa).

The CID domain occupies 1–133; that stretch reads MSAFSEAALE…QLRQALYGDR (133 aa).

This sequence belongs to the UPF0400 (RTT103) family. As to quaternary structure, may form a heterodimer with RPRD1B. Associates with the RNA polymerase II subunit POLR2A (via CTD phosphorylated at 'Ser-2' and 'Ser-7' of the heptad repeats).

Its subcellular location is the nucleus. Its function is as follows. Interacts with phosphorylated C-terminal heptapeptide repeat domain (CTD) of the largest RNA polymerase II subunit POLR2A, and participates in dephosphorylation of the CTD by RPAP2. May act as a negative regulator of cyclin-D1 (CCND1) and cyclin-E (CCNE1) in the cell cycle. This Gallus gallus (Chicken) protein is Regulation of nuclear pre-mRNA domain-containing protein 1A (RPRD1A).